The chain runs to 444 residues: 3-phosphoshikimate 1-carboxyvinyltransferase (444 aa).

3-phosphoshikimate contacts are provided by Lys-29, Ser-30, and Arg-34. A phosphoenolpyruvate-binding site is contributed by Lys-29. Residues Gly-102 and Arg-131 each coordinate phosphoenolpyruvate. Positions 176, 178, 326, and 353 each coordinate 3-phosphoshikimate. Gln-178 contacts phosphoenolpyruvate. The active-site Proton acceptor is Asp-326. Phosphoenolpyruvate is bound by residues Arg-357 and Arg-399.

The protein belongs to the EPSP synthase family. Monomer.

It is found in the cytoplasm. It catalyses the reaction 3-phosphoshikimate + phosphoenolpyruvate = 5-O-(1-carboxyvinyl)-3-phosphoshikimate + phosphate. Its pathway is metabolic intermediate biosynthesis; chorismate biosynthesis; chorismate from D-erythrose 4-phosphate and phosphoenolpyruvate: step 6/7. Functionally, catalyzes the transfer of the enolpyruvyl moiety of phosphoenolpyruvate (PEP) to the 5-hydroxyl of shikimate-3-phosphate (S3P) to produce enolpyruvyl shikimate-3-phosphate and inorganic phosphate. The protein is 3-phosphoshikimate 1-carboxyvinyltransferase of Synechococcus sp. (strain JA-3-3Ab) (Cyanobacteria bacterium Yellowstone A-Prime).